Reading from the N-terminus, the 556-residue chain is Beta-hexosaminidase subunit beta (556 aa).

A signal peptide spans 1 to 42 (MELCGLGLPRPPMLLALLLATLLAAMLALLTQVALVVQVAEA). A propeptide spanning residues 43–121 (ARAPSVSAKP…HHEPAEFQAK (79 aa)) is cleaved from the precursor. An N-linked (GlcNAc...) asparagine glycan is attached at Asn-84. An intrachain disulfide couples Cys-91 to Cys-137. 3 N-linked (GlcNAc...) asparagine glycosylation sites follow: Asn-142, Asn-190, and Asn-327. Disulfide bonds link Cys-309–Cys-360 and Cys-534–Cys-551. Residue Glu-355 is the Proton donor of the active site.

Belongs to the glycosyl hydrolase 20 family. In terms of assembly, there are 3 forms of beta-hexosaminidase: hexosaminidase A is a heterodimer composed of one subunit alpha and one subunit beta (chain A and B); hexosaminidase B is a homodimer of two beta subunits (two chains A and B); hexosaminidase S is a homodimer of two alpha subunits. The composition of the dimer (isozyme A versus isozyme S) has a significant effect on the substrate specificity of the alpha subunit active site. Post-translationally, N-linked glycans at Asn-142 and Asn-190 consist of Man(3)-GlcNAc(2) and Man(5 to 7)-GlcNAc(2), respectively. The beta-A and beta-B chains are produced by proteolytic processing of the precursor beta chain.

The protein localises to the lysosome. It is found in the cytoplasmic vesicle. Its subcellular location is the secretory vesicle. The protein resides in the cortical granule. It carries out the reaction Hydrolysis of terminal non-reducing N-acetyl-D-hexosamine residues in N-acetyl-beta-D-hexosaminides.. The enzyme catalyses N-acetyl-beta-D-galactosaminyl-(1-&gt;4)-beta-D-3-sulfogalactosyl-(1-&gt;4)-beta-D-glucosyl-(1&lt;-&gt;1')-ceramide + H2O = a beta-D-3-sulfogalactosyl-(1-&gt;4)-beta-D-glucosyl-(1&lt;-&gt;1')-ceramide + N-acetyl-beta-D-galactosamine. It catalyses the reaction a ganglioside GM2 (d18:1(4E)) + H2O = a ganglioside GM3 (d18:1(4E)) + N-acetyl-beta-D-galactosamine. The catalysed reaction is a ganglioside GM2 + H2O = a ganglioside GM3 + N-acetyl-beta-D-galactosamine. It carries out the reaction beta-D-GalNAc-(1-&gt;4)-alpha-L-IdoA-(1-&gt;3)-beta-D-GalNAc-4-sulfate-(1-&gt;4)-alpha-L-IdoA-(1-&gt;3)-D-GalNAc-4-sulfate + H2O = alpha-L-IdoA-(1-&gt;3)-beta-D-GalNAc-4-sulfate-(1-&gt;4)-alpha-L-IdoA-(1-&gt;3)-D-GalNAc-4-sulfate + N-acetyl-D-galactosamine. The enzyme catalyses N-acetyl-beta-D-6-sulfogalactosaminyl-(1-&gt;4)-alpha-L-iduronyl-(1-&gt;3)-N-acetyl-D-6-sulfogalactosamine + H2O = alpha-L-iduronyl-(1-&gt;3)-N-acetyl-D-6-sulfogalactosamine + N-acetyl-D-6-sulfogalactosamine. With respect to regulation, addition of GM2A stimulates the hydrolysis of sulfated glycosphingolipid SM2 and the ganglioside GM2. Its function is as follows. Hydrolyzes the non-reducing end N-acetyl-D-hexosamine and/or sulfated N-acetyl-D-hexosamine of glycoconjugates, such as the oligosaccharide moieties from proteins and neutral glycolipids, or from certain mucopolysaccharides. The isozyme B does not hydrolyze each of these substrates, however hydrolyzes efficiently neutral oligosaccharide. Only the isozyme A is responsible for the degradation of GM2 gangliosides in the presence of GM2A. During fertilization is responsible, at least in part, for the zona block to polyspermy. Present in the cortical granules of non-activated oocytes, is exocytosed during the cortical reaction in response to oocyte activation and inactivates the sperm galactosyltransferase-binding site, accounting for the block in sperm binding to the zona pellucida. The sequence is that of Beta-hexosaminidase subunit beta from Homo sapiens (Human).